We begin with the raw amino-acid sequence, 231 residues long: Adenylate kinase (231 aa).

12–17 serves as a coordination point for ATP; the sequence is GAGKGT. The tract at residues 32–61 is NMP; sequence STGDMLRAAVKAKTPLGLEVKKIMESGGLV. AMP-binding positions include Thr-33, Arg-38, 59–61, 87–90, and Gln-94; these read GLV and GFPR. An LID region spans residues 124-161; the sequence is GRLIHPASGRTYHRRYNPPKVADKDDVTGEPLIQRADD. ATP is bound by residues Arg-125 and 134 to 135; that span reads TY. Residues Arg-158 and Arg-169 each contribute to the AMP site. An ATP-binding site is contributed by Gly-205.

It belongs to the adenylate kinase family. Monomer.

Its subcellular location is the cytoplasm. It carries out the reaction AMP + ATP = 2 ADP. It participates in purine metabolism; AMP biosynthesis via salvage pathway; AMP from ADP: step 1/1. Its function is as follows. Catalyzes the reversible transfer of the terminal phosphate group between ATP and AMP. Plays an important role in cellular energy homeostasis and in adenine nucleotide metabolism. The chain is Adenylate kinase from Coxiella burnetii (strain CbuK_Q154) (Coxiella burnetii (strain Q154)).